The chain runs to 160 residues: Putative UPF0479 protein YIL177W-A (160 aa).

2 consecutive transmembrane segments (helical) span residues I39–Q59 and V136–H156.

The protein belongs to the UPF0479 family.

The protein localises to the membrane. The sequence is that of Putative UPF0479 protein YIL177W-A from Saccharomyces cerevisiae (strain ATCC 204508 / S288c) (Baker's yeast).